The following is a 302-amino-acid chain: Aspartate carbamoyltransferase catalytic subunit (302 aa).

Residues Arg53 and Thr54 each coordinate carbamoyl phosphate. Lys82 lines the L-aspartate pocket. Residues Arg103, His131, and Gln134 each coordinate carbamoyl phosphate. 2 residues coordinate L-aspartate: Arg164 and Arg223. The carbamoyl phosphate site is built by Leu260 and Pro261.

This sequence belongs to the aspartate/ornithine carbamoyltransferase superfamily. ATCase family. In terms of assembly, heterooligomer of catalytic and regulatory chains.

The enzyme catalyses carbamoyl phosphate + L-aspartate = N-carbamoyl-L-aspartate + phosphate + H(+). It participates in pyrimidine metabolism; UMP biosynthesis via de novo pathway; (S)-dihydroorotate from bicarbonate: step 2/3. Functionally, catalyzes the condensation of carbamoyl phosphate and aspartate to form carbamoyl aspartate and inorganic phosphate, the committed step in the de novo pyrimidine nucleotide biosynthesis pathway. This chain is Aspartate carbamoyltransferase catalytic subunit, found in Methanococcus maripaludis (strain DSM 14266 / JCM 13030 / NBRC 101832 / S2 / LL).